Consider the following 570-residue polypeptide: Guanine nucleotide-binding protein alpha-3 subunit (570 aa).

A PH domain is found at 10–113; it reads RETLRAYLSK…WIEAIKHAIE (104 aa). Positions 144–570 constitute a G-alpha domain; sequence PVLKLLLLGT…IISKTLEFYC (427 aa). The G1 motif stretch occupies residues 147–160; it reads KLLLLGTGESGKST. Residue 152-159 coordinates GTP; sequence GTGESGKS. Serine 159 is a Mg(2+) binding site. Low complexity-rich tracts occupy residues 254–272 and 290–316; these read NNNSNSSSLKNNSGGSSSS and NSNSASPNGPSSSTTTSTINTHNRSNS. A disordered region spans residues 254 to 321; that stretch reads NNNSNSSSLK…NRSNSDGSSN (68 aa). The G2 motif stretch occupies residues 386 to 394; it reads DILKSRATT. GTP contacts are provided by residues 388-394, 414-418, 483-486, and alanine 544; these read LKSRATT, DVAGQ, and NKID. Residue threonine 394 participates in Mg(2+) binding. Residues 410–419 form a G3 motif region; sequence FRIVDVAGQR. Residues 479–486 form a G4 motif region; sequence ILFLNKID. The interval 542–547 is G5 motif; sequence TCATDT.

Belongs to the G-alpha family. In terms of assembly, g proteins are composed of 3 units; alpha, beta and gamma. The alpha chain contains the guanine nucleotide binding site.

Guanine nucleotide-binding proteins (G proteins) are involved as modulators or transducers in various transmembrane signaling systems. G alpha-3 plays a role in development. G alpha-3 mutants fail to aggregate. The polypeptide is Guanine nucleotide-binding protein alpha-3 subunit (gpaC) (Dictyostelium discoideum (Social amoeba)).